We begin with the raw amino-acid sequence, 336 residues long: Holliday junction branch migration complex subunit RuvB (336 aa).

Residues 4–184 form a large ATPase domain (RuvB-L) region; it reads ADRLISAGTT…FGIVQRLEFY (181 aa). Residues I23, R24, G65, K68, T69, T70, 131–133, R174, Y184, and R221 contribute to the ATP site; that span reads EDY. T69 is a Mg(2+) binding site. Residues 185–255 form a small ATPAse domain (RuvB-S) region; the sequence is QVPDLQYIVS…IAAQALDMLN (71 aa). The head domain (RuvB-H) stretch occupies residues 258–336; that stretch reads AEGFDYMDRK…HFGITPPEMP (79 aa). Residues R294, R313, and R318 each contribute to the DNA site.

This sequence belongs to the RuvB family. In terms of assembly, homohexamer. Forms an RuvA(8)-RuvB(12)-Holliday junction (HJ) complex. HJ DNA is sandwiched between 2 RuvA tetramers; dsDNA enters through RuvA and exits via RuvB. An RuvB hexamer assembles on each DNA strand where it exits the tetramer. Each RuvB hexamer is contacted by two RuvA subunits (via domain III) on 2 adjacent RuvB subunits; this complex drives branch migration. In the full resolvosome a probable DNA-RuvA(4)-RuvB(12)-RuvC(2) complex forms which resolves the HJ.

It is found in the cytoplasm. It carries out the reaction ATP + H2O = ADP + phosphate + H(+). Its function is as follows. The RuvA-RuvB-RuvC complex processes Holliday junction (HJ) DNA during genetic recombination and DNA repair, while the RuvA-RuvB complex plays an important role in the rescue of blocked DNA replication forks via replication fork reversal (RFR). RuvA specifically binds to HJ cruciform DNA, conferring on it an open structure. The RuvB hexamer acts as an ATP-dependent pump, pulling dsDNA into and through the RuvAB complex. RuvB forms 2 homohexamers on either side of HJ DNA bound by 1 or 2 RuvA tetramers; 4 subunits per hexamer contact DNA at a time. Coordinated motions by a converter formed by DNA-disengaged RuvB subunits stimulates ATP hydrolysis and nucleotide exchange. Immobilization of the converter enables RuvB to convert the ATP-contained energy into a lever motion, pulling 2 nucleotides of DNA out of the RuvA tetramer per ATP hydrolyzed, thus driving DNA branch migration. The RuvB motors rotate together with the DNA substrate, which together with the progressing nucleotide cycle form the mechanistic basis for DNA recombination by continuous HJ branch migration. Branch migration allows RuvC to scan DNA until it finds its consensus sequence, where it cleaves and resolves cruciform DNA. This is Holliday junction branch migration complex subunit RuvB from Shigella flexneri serotype 5b (strain 8401).